Consider the following 316-residue polypeptide: Pantothenate kinase (316 aa).

95–102 (GSVAVGKS) is an ATP binding site.

The protein belongs to the prokaryotic pantothenate kinase family.

It localises to the cytoplasm. It catalyses the reaction (R)-pantothenate + ATP = (R)-4'-phosphopantothenate + ADP + H(+). Its pathway is cofactor biosynthesis; coenzyme A biosynthesis; CoA from (R)-pantothenate: step 1/5. This Salmonella agona (strain SL483) protein is Pantothenate kinase.